Consider the following 354-residue polypeptide: Uroporphyrinogen decarboxylase (354 aa).

Substrate contacts are provided by residues R27–R31, D77, Y154, T209, and H327.

Belongs to the uroporphyrinogen decarboxylase family. Homodimer.

It localises to the cytoplasm. The catalysed reaction is uroporphyrinogen III + 4 H(+) = coproporphyrinogen III + 4 CO2. The protein operates within porphyrin-containing compound metabolism; protoporphyrin-IX biosynthesis; coproporphyrinogen-III from 5-aminolevulinate: step 4/4. Functionally, catalyzes the decarboxylation of four acetate groups of uroporphyrinogen-III to yield coproporphyrinogen-III. The sequence is that of Uroporphyrinogen decarboxylase from Salmonella paratyphi B (strain ATCC BAA-1250 / SPB7).